The primary structure comprises 308 residues: Oxygen-dependent coproporphyrinogen-III oxidase (308 aa).

Residue serine 97 participates in substrate binding. The a divalent metal cation site is built by histidine 101 and histidine 111. Residue histidine 111 is the Proton donor of the active site. 113–115 contacts substrate; the sequence is NVR. Histidine 153 and histidine 183 together coordinate a divalent metal cation. Residues 248–283 are important for dimerization; it reads YVEFNLVWDRGTHFGLQSGGRTESILMSMPPLASWS. 266–268 lines the substrate pocket; it reads GGR.

This sequence belongs to the aerobic coproporphyrinogen-III oxidase family. In terms of assembly, homodimer. A divalent metal cation is required as a cofactor.

It localises to the cytoplasm. It catalyses the reaction coproporphyrinogen III + O2 + 2 H(+) = protoporphyrinogen IX + 2 CO2 + 2 H2O. It functions in the pathway porphyrin-containing compound metabolism; protoporphyrin-IX biosynthesis; protoporphyrinogen-IX from coproporphyrinogen-III (O2 route): step 1/1. Functionally, involved in the heme biosynthesis. Catalyzes the aerobic oxidative decarboxylation of propionate groups of rings A and B of coproporphyrinogen-III to yield the vinyl groups in protoporphyrinogen-IX. The sequence is that of Oxygen-dependent coproporphyrinogen-III oxidase from Polaromonas sp. (strain JS666 / ATCC BAA-500).